We begin with the raw amino-acid sequence, 41 residues long: Large ribosomal subunit protein bL36 (41 aa).

This sequence belongs to the bacterial ribosomal protein bL36 family.

The polypeptide is Large ribosomal subunit protein bL36 (Hydrogenovibrio crunogenus (strain DSM 25203 / XCL-2) (Thiomicrospira crunogena)).